Here is a 1221-residue protein sequence, read N- to C-terminus: Reverse gyrase subunit B (1221 aa).

The segment at 56-97 (NEPVAIFGSSCVLCGGDCSSVRLTSRIGICERCLPVDTETLR) adopts an RG N-terminal-type zinc-finger fold. Residues Cys-66, Cys-69, Cys-85, and Cys-88 each contribute to the Zn(2+) site. ATP is bound by residues Gln-161 and 178-185 (APTGTGKT). One can recognise a Helicase ATP-binding domain in the interval 165–400 (TRRLVKGCSF…AVVRELFDFE (236 aa)). Residues 284 to 287 (DDVD) carry the DEAD box motif. In terms of domain architecture, Helicase C-terminal spans 424 to 600 (AVERIVRKAG…PLSLNTLMKL (177 aa)). One can recognise a Toprim domain in the interval 779–935 (SALMIVESPN…QVYRTEFHEV (157 aa)). Glu-785 lines the Mg(2+) pocket. Residues 856–882 (LGRCSECGEQVVGSEECPNCGGEVELK) form an RG C-terminal-type zinc finger. Residues Cys-859, Cys-862, Cys-872, and Cys-875 each contribute to the Zn(2+) site. Asp-904 is a Mg(2+) binding site. The Topo IA-type catalytic domain occupies 953–1221 (DAGRVSAQIL…MLHLAGVSGR (269 aa)).

It in the C-terminal section; belongs to the type IA topoisomerase family. In the N-terminal section; belongs to the DEAD box helicase family. DDVD subfamily. Heterodimer of an RgyrA and RgyrB subunit. The topoisomerase domain is shared between the two subunits. Zn(2+) is required as a cofactor. The cofactor is Mg(2+). The N-terminus is partially blocked.

It localises to the cytoplasm. The catalysed reaction is ATP + H2O = ADP + phosphate + H(+). Modifies the topological state of DNA by introducing positive supercoils in an ATP-dependent process; dATP also allows positive supercoiling. Increases the linking number in steps of +1. Only this subunit binds ATP, it does so in a DNA- and RgyA-independent manner. Hydrolyzes ATP only in the presence of DNA. The RgyA subunit transiently cleaves a single DNA strand and remains covalently bound to the 5' DNA end probably through a tyrosine residue. It changes linking number in steps of one, and nicks DNA preferentially at 5'-CNNN | 3'-sites with a strong preference for 4 pyrimidine residues. There are about 1000 heterodimers per cell. May be involved in rewinding the DNA strands in the regions of the chromosome that have opened up to allow transcription or replication. Functionally, this subunit expressed in E.coli only has DNA-dependent ATPase activity at 80 degrees Celsius. Reverse gyrase activity is reconstituted after incubation at 80 degrees Celsius for 5 minutes, positive supercoiling requires ATP and Mg(2+). In the presence of ATP it binds and nicks substrate but does not make closed product. This chain is Reverse gyrase subunit B, found in Methanopyrus kandleri (strain AV19 / DSM 6324 / JCM 9639 / NBRC 100938).